The following is a 142-amino-acid chain: MAPSAKATAAKKAVVKGTNGKKALKVRTSATFRLPKTLKLARAPKYASKAVPHYNRLDSYKVIEQPITSETAMKKVEDGNILVFQVSMKANKYQIKKAVKELYEVDVLKVNTLVRPNGTKKAYVRLTADYDALDIANRIGYI.

A Glycyl lysine isopeptide (Lys-Gly) (interchain with G-Cter in SUMO) cross-link involves residue Lys-61.

This sequence belongs to the universal ribosomal protein uL23 family. In terms of assembly, component of the large ribosomal subunit (LSU). Mature yeast ribosomes consist of a small (40S) and a large (60S) subunit. The 40S small subunit contains 1 molecule of ribosomal RNA (18S rRNA) and 33 different proteins (encoded by 57 genes). The large 60S subunit contains 3 rRNA molecules (25S, 5.8S and 5S rRNA) and 46 different proteins (encoded by 81 genes). uL23 is associated with the polypeptide exit tunnel.

It is found in the cytoplasm. In terms of biological role, component of the ribosome, a large ribonucleoprotein complex responsible for the synthesis of proteins in the cell. The small ribosomal subunit (SSU) binds messenger RNAs (mRNAs) and translates the encoded message by selecting cognate aminoacyl-transfer RNA (tRNA) molecules. The large subunit (LSU) contains the ribosomal catalytic site termed the peptidyl transferase center (PTC), which catalyzes the formation of peptide bonds, thereby polymerizing the amino acids delivered by tRNAs into a polypeptide chain. The nascent polypeptides leave the ribosome through a tunnel in the LSU and interact with protein factors that function in enzymatic processing, targeting, and the membrane insertion of nascent chains at the exit of the ribosomal tunnel. uL23 is a major component of the universal docking site for these factors at the polypeptide exit tunnel. This is Large ribosomal subunit protein uL23 from Saccharomyces cerevisiae (strain ATCC 204508 / S288c) (Baker's yeast).